The sequence spans 281 residues: 2,3,4,5-tetrahydropyridine-2,6-dicarboxylate N-succinyltransferase (281 aa).

2 residues coordinate substrate: R108 and D145.

This sequence belongs to the transferase hexapeptide repeat family. As to quaternary structure, homotrimer.

The protein resides in the cytoplasm. It carries out the reaction (S)-2,3,4,5-tetrahydrodipicolinate + succinyl-CoA + H2O = (S)-2-succinylamino-6-oxoheptanedioate + CoA. It functions in the pathway amino-acid biosynthesis; L-lysine biosynthesis via DAP pathway; LL-2,6-diaminopimelate from (S)-tetrahydrodipicolinate (succinylase route): step 1/3. The protein is 2,3,4,5-tetrahydropyridine-2,6-dicarboxylate N-succinyltransferase of Rhodopseudomonas palustris (strain ATCC BAA-98 / CGA009).